A 132-amino-acid polypeptide reads, in one-letter code: Small ribosomal subunit protein uS8c (132 aa).

Belongs to the universal ribosomal protein uS8 family. Part of the 30S ribosomal subunit.

The protein resides in the plastid. Its subcellular location is the chloroplast. Its function is as follows. One of the primary rRNA binding proteins, it binds directly to 16S rRNA central domain where it helps coordinate assembly of the platform of the 30S subunit. The chain is Small ribosomal subunit protein uS8c (rps8) from Dioscorea elephantipes (Elephant's foot yam).